The following is a 399-amino-acid chain: Acetate kinase (399 aa).

Asparagine 7 serves as a coordination point for Mg(2+). Lysine 14 is a binding site for ATP. Arginine 91 contributes to the substrate binding site. The active-site Proton donor/acceptor is aspartate 148. ATP is bound by residues 208 to 212 (HLGNG), 283 to 285 (DFR), and 331 to 335 (GLGEN). Mg(2+) is bound at residue glutamate 384.

The protein belongs to the acetokinase family. Homodimer. Mg(2+) is required as a cofactor. Mn(2+) serves as cofactor.

It is found in the cytoplasm. The enzyme catalyses acetate + ATP = acetyl phosphate + ADP. Its pathway is metabolic intermediate biosynthesis; acetyl-CoA biosynthesis; acetyl-CoA from acetate: step 1/2. In terms of biological role, catalyzes the formation of acetyl phosphate from acetate and ATP. Can also catalyze the reverse reaction. The protein is Acetate kinase of Desulfitobacterium hafniense (strain DSM 10664 / DCB-2).